Reading from the N-terminus, the 239-residue chain is LexA repressor (239 aa).

Residues 26–46 (FDEMKDALDLASKSGIHRLIT) constitute a DNA-binding region (H-T-H motif). Active-site for autocatalytic cleavage activity residues include serine 159 and lysine 197.

This sequence belongs to the peptidase S24 family. As to quaternary structure, homodimer.

The catalysed reaction is Hydrolysis of Ala-|-Gly bond in repressor LexA.. Represses a number of genes involved in the response to DNA damage (SOS response), including recA and lexA. In the presence of single-stranded DNA, RecA interacts with LexA causing an autocatalytic cleavage which disrupts the DNA-binding part of LexA, leading to derepression of the SOS regulon and eventually DNA repair. This chain is LexA repressor, found in Allorhizobium ampelinum (strain ATCC BAA-846 / DSM 112012 / S4) (Agrobacterium vitis (strain S4)).